A 534-amino-acid chain; its full sequence is UDP-glucuronosyltransferase 1A5 (534 aa).

An N-terminal signal peptide occupies residues 1 to 28 (MATGLQVPLPQLATGLLLLLSVQPWAES). N-linked (GlcNAc...) asparagine glycosylation is found at asparagine 119, asparagine 296, and asparagine 348. Residues 492–508 (VIGFLLAVVLTVAFITF) form a helical membrane-spanning segment.

Belongs to the UDP-glycosyltransferase family. As to quaternary structure, homodimer. Homooligomer. Interacts with UGT1A1, UGT1A3, UGT1A4, UGT1A6, UGT1A7, UGT1A8, UGT1A9 and UGT1A10 to form heterodimers. Isoform 1 interacts with isoform 2/i2 suggesting that oligomerization is involved in negative regulation of transferase activity by isoform 2. Isoform 1 also interacts with respective i2 isoforms of UGT1A1, UGT1A3, UGT1A4, UGT1A6, UGT1A7, UGT1A8, UGT1A9 and UGT1A10. In terms of tissue distribution, isoform 1 and isoform 2 are expressed in colon and small intestine. Neither isoform is expressed in liver, kidney or esophagus.

The protein localises to the endoplasmic reticulum membrane. The catalysed reaction is glucuronate acceptor + UDP-alpha-D-glucuronate = acceptor beta-D-glucuronoside + UDP + H(+). It carries out the reaction zolasartan + UDP-alpha-D-glucuronate = zolarsartan-1-N-beta-D-glucuronide + UDP. Its function is as follows. UDP-glucuronosyltransferase (UGT) that catalyzes phase II biotransformation reactions in which lipophilic substrates are conjugated with glucuronic acid to increase the metabolite's water solubility, thereby facilitating excretion into either the urine or bile. Essential for the elimination and detoxification of drugs, xenobiotics and endogenous compounds. Involved in the glucuronidation of the AGTR1 angiotensin receptor antagonist zolarsatan, a drug which can inhibit the effect of angiotensin II. In terms of biological role, lacks UGT glucuronidation activity but acts as a negative regulator of isoform 1. The protein is UDP-glucuronosyltransferase 1A5 of Homo sapiens (Human).